A 391-amino-acid chain; its full sequence is Formate-dependent phosphoribosylglycinamide formyltransferase (391 aa).

Residues 20–21 (EL) and Glu-80 each bind N(1)-(5-phospho-beta-D-ribosyl)glycinamide. Residues Arg-112, Lys-153, 158-163 (SSGKGQ), 193-196 (EGFI), and Glu-201 contribute to the ATP site. An ATP-grasp domain is found at 117 to 306 (RLAAETLGLP…EFALHVRAIL (190 aa)). Glu-265 and Glu-277 together coordinate Mg(2+). Residues Asp-284, Lys-354, and 361–362 (RR) contribute to the N(1)-(5-phospho-beta-D-ribosyl)glycinamide site.

Belongs to the PurK/PurT family. As to quaternary structure, homodimer.

It catalyses the reaction N(1)-(5-phospho-beta-D-ribosyl)glycinamide + formate + ATP = N(2)-formyl-N(1)-(5-phospho-beta-D-ribosyl)glycinamide + ADP + phosphate + H(+). Its pathway is purine metabolism; IMP biosynthesis via de novo pathway; N(2)-formyl-N(1)-(5-phospho-D-ribosyl)glycinamide from N(1)-(5-phospho-D-ribosyl)glycinamide (formate route): step 1/1. Functionally, involved in the de novo purine biosynthesis. Catalyzes the transfer of formate to 5-phospho-ribosyl-glycinamide (GAR), producing 5-phospho-ribosyl-N-formylglycinamide (FGAR). Formate is provided by PurU via hydrolysis of 10-formyl-tetrahydrofolate. The protein is Formate-dependent phosphoribosylglycinamide formyltransferase of Shewanella sp. (strain ANA-3).